The chain runs to 497 residues: Glycerol kinase (497 aa).

Residue Thr-13 coordinates ADP. Thr-13, Thr-14, and Ser-15 together coordinate ATP. Residue Thr-13 coordinates sn-glycerol 3-phosphate. Arg-17 contacts ADP. Residues Arg-83, Glu-84, and Tyr-135 each coordinate sn-glycerol 3-phosphate. The glycerol site is built by Arg-83, Glu-84, and Tyr-135. His-231 is modified (phosphohistidine; by HPr). Asp-245 serves as a coordination point for sn-glycerol 3-phosphate. Glycerol is bound by residues Asp-245 and Gln-246. ADP contacts are provided by Thr-267 and Gly-310. Residues Thr-267, Gly-310, Gln-314, and Gly-411 each contribute to the ATP site. ADP is bound by residues Gly-411 and Asn-415.

This sequence belongs to the FGGY kinase family. In terms of assembly, homotetramer and homodimer (in equilibrium). Post-translationally, the phosphoenolpyruvate-dependent sugar phosphotransferase system (PTS), including enzyme I, and histidine-containing protein (HPr) are required for the phosphorylation, which leads to the activation of the enzyme.

The enzyme catalyses glycerol + ATP = sn-glycerol 3-phosphate + ADP + H(+). Its pathway is polyol metabolism; glycerol degradation via glycerol kinase pathway; sn-glycerol 3-phosphate from glycerol: step 1/1. Activated by phosphorylation and inhibited by fructose 1,6-bisphosphate (FBP). Functionally, key enzyme in the regulation of glycerol uptake and metabolism. Catalyzes the phosphorylation of glycerol to yield sn-glycerol 3-phosphate. The chain is Glycerol kinase from Listeria innocua serovar 6a (strain ATCC BAA-680 / CLIP 11262).